We begin with the raw amino-acid sequence, 188 residues long: GTP cyclohydrolase 1 (188 aa).

3 residues coordinate Zn(2+): Cys-73, His-76, and Cys-144.

Belongs to the GTP cyclohydrolase I family. Homomer.

The enzyme catalyses GTP + H2O = 7,8-dihydroneopterin 3'-triphosphate + formate + H(+). The protein operates within cofactor biosynthesis; 7,8-dihydroneopterin triphosphate biosynthesis; 7,8-dihydroneopterin triphosphate from GTP: step 1/1. This is GTP cyclohydrolase 1 from Caldivirga maquilingensis (strain ATCC 700844 / DSM 13496 / JCM 10307 / IC-167).